Reading from the N-terminus, the 665-residue chain is ATPase WRNIP1 (665 aa).

The UBZ4-type zinc finger occupies 17 to 44 (QVQCPVCQQMMPAAHINSHLDRCLLLHP). Zn(2+) contacts are provided by Cys20, Cys23, His31, His35, and Cys39. The segment at 48-190 (AEPAAGSHRA…DGEDDPGHWD (143 aa)) is disordered. Ser65 and Ser75 each carry phosphoserine. A compositionally biased stretch (polar residues) spans 76 to 89 (ESSALKQPATPTAA). Residue Lys81 forms a Glycyl lysine isopeptide (Lys-Gly) (interchain with G-Cter in ubiquitin) linkage. Thr85 is subject to Phosphothreonine. Residues Ser91 and Ser92 each carry the phosphoserine modification. The segment covering 92–104 (SEGEGEEGDDGGE) has biased composition (acidic residues). At Thr116 the chain carries Phosphothreonine. Residues 130 to 155 (RSSSPGRKGSGKRPAAAAAAGSASPR) show a composition bias toward low complexity. Ser139 is modified (phosphoserine). Residue Lys141 forms a Glycyl lysine isopeptide (Lys-Gly) (interchain with G-Cter in ubiquitin) linkage. A Phosphoserine modification is found at Ser153. Residues 159–184 (EAEAQEEEEAVGDGDGDGDADADGED) show a composition bias toward acidic residues. A Glycyl lysine isopeptide (Lys-Gly) (interchain with G-Cter in ubiquitin) cross-link involves residue Lys225. Residue 270–276 (PGCGKTT) coordinates ATP. Residues Lys301, Lys310, Lys316, Lys322, and Lys335 each participate in a glycyl lysine isopeptide (Lys-Gly) (interchain with G-Cter in ubiquitin) cross-link. Residue Lys482 forms a Glycyl lysine isopeptide (Lys-Gly) (interchain with G-Cter in SUMO2); alternate linkage. A Glycyl lysine isopeptide (Lys-Gly) (interchain with G-Cter in ubiquitin); alternate cross-link involves residue Lys482. Residues Tyr534 and Tyr562 each carry the phosphotyrosine modification. Residue Lys627 forms a Glycyl lysine isopeptide (Lys-Gly) (interchain with G-Cter in ubiquitin) linkage. A Glycyl lysine isopeptide (Lys-Gly) (interchain with G-Cter in ubiquitin); alternate cross-link involves residue Lys633. Lys633 bears the N6-acetyllysine; alternate mark. Lys636 participates in a covalent cross-link: Glycyl lysine isopeptide (Lys-Gly) (interchain with G-Cter in ubiquitin).

The protein belongs to the AAA ATPase family. RarA/MGS1/WRNIP1 subfamily. Forms homooligomers, possibly octamers. Directly interacts with POLD1, POLD2 and POLD4. Interacts with the N-terminal domain of WRN. Interacts (via UBZ4-type zinc finger) with monoubiquitin and polyubiquitin. Interacts with TRIM14 and PPP6C; these interactions positively regulate the RIGI signaling pathway. Post-translationally, sumoylated with SUMO1 and SUMO2/3. In terms of tissue distribution, ubiquitously expressed.

It is found in the nucleus. The protein resides in the cytoplasm. It catalyses the reaction ATP + H2O = ADP + phosphate + H(+). Functions as a modulator of initiation or reinitiation events during DNA polymerase delta-mediated DNA synthesis. In the presence of ATP, stimulation of DNA polymerase delta-mediated DNA synthesis is decreased. Also plays a role in the innate immune defense against viruses. Stabilizes the RIGI dsRNA interaction and promotes RIGI 'Lys-63'-linked polyubiquitination. In turn, RIGI transmits the signal through mitochondrial MAVS. The sequence is that of ATPase WRNIP1 from Homo sapiens (Human).